The primary structure comprises 489 residues: UDP-N-acetylmuramoylalanine--D-glutamate ligase (489 aa).

Position 126–132 (126–132 (GTNGKTT)) interacts with ATP.

This sequence belongs to the MurCDEF family.

Its subcellular location is the cytoplasm. It carries out the reaction UDP-N-acetyl-alpha-D-muramoyl-L-alanine + D-glutamate + ATP = UDP-N-acetyl-alpha-D-muramoyl-L-alanyl-D-glutamate + ADP + phosphate + H(+). Its pathway is cell wall biogenesis; peptidoglycan biosynthesis. Functionally, cell wall formation. Catalyzes the addition of glutamate to the nucleotide precursor UDP-N-acetylmuramoyl-L-alanine (UMA). The chain is UDP-N-acetylmuramoylalanine--D-glutamate ligase from Mycolicibacterium paratuberculosis (strain ATCC BAA-968 / K-10) (Mycobacterium paratuberculosis).